The primary structure comprises 288 residues: Solute carrier family 25 member 45 (288 aa).

Solcar repeat units follow at residues 1-83 (MPVE…TLLV), 97-191 (PSYM…LCRQ), and 199-286 (PSSA…LLRW). Helical transmembrane passes span 6 to 26 (FVAG…FDTV), 63 to 83 (IASI…TLLV), 100 to 120 (MHIF…LAPF), 166 to 186 (GAWA…ITYE), 202 to 222 (ATVL…ATPL), and 266 to 286 (SARA…LLRW).

Belongs to the mitochondrial carrier (TC 2.A.29) family.

It localises to the mitochondrion inner membrane. The sequence is that of Solute carrier family 25 member 45 (SLC25A45) from Homo sapiens (Human).